The chain runs to 387 residues: Alpha-2B adrenergic receptor (387 aa).

A helical membrane pass occupies residues 1 to 25; it reads AIAAVITFLILFTIFGNALVILAVL. The Cytoplasmic segment spans residues 26-36; sequence TSRSLRAPQNL. Residues 37–62 form a helical membrane-spanning segment; sequence FLVSLAAADILVATLIIPFSLANELL. The Extracellular portion of the chain corresponds to 63–72; sequence GYWYFRHTWC. C72 and C151 are oxidised to a cystine. The chain crosses the membrane as a helical span at residues 73 to 95; sequence XVYLALDVLFCTSSIVHLCAISL. Residues 96-117 lie on the Cytoplasmic side of the membrane; that stretch reads DRYWAVSRALEYNSKRTPRRIK. The chain crosses the membrane as a helical span at residues 118–140; that stretch reads CIILTVWLIAAAISLPPLIYKGD. At 141–156 the chain is on the extracellular side; the sequence is QDPQPRGRPQCKLNQE. A helical transmembrane segment spans residues 157 to 180; that stretch reads AWYILSSSIGSFFVPCLIMILVYL. Topologically, residues 181 to 351 are cytoplasmic; sequence RIYLIAKRSS…LTREKRFTFV (171 aa). Residues 193 to 303 form a disordered region; sequence RKPRAKGXPR…VPASPALACS (111 aa). The span at 279-290 shows a compositional bias: acidic residues; that stretch reads PEEEAEEEEECG. A helical transmembrane segment spans residues 352-375; that stretch reads LAVVIGVFVLCWFPFFFSYSLGAI. Topologically, residues 376–384 are extracellular; sequence CPQHCKVPH. A helical transmembrane segment spans residues 385–387; that stretch reads GLF.

The protein belongs to the G-protein coupled receptor 1 family. Adrenergic receptor subfamily. ADRA2B sub-subfamily. In terms of assembly, interacts with RAB26. Interacts with PPP1R9B. Interacts with GGA1, GGA2 and GGA3.

The protein localises to the cell membrane. Functionally, alpha-2 adrenergic receptors mediate the catecholamine-induced inhibition of adenylate cyclase through the action of G proteins. This chain is Alpha-2B adrenergic receptor (ADRA2B), found in Macroscelides proboscideus (Short-eared elephant shrew).